The following is a 251-amino-acid chain: 16S rRNA (guanine(1405)-N(7))-methyltransferase (251 aa).

S-adenosyl-L-methionine contacts are provided by residues Tyr56, 81-83 (HAS), Arg87, Ala111, Asp131, 157-158 (DV), Phe173, and Glu182.

It belongs to the methyltransferase superfamily. Aminoglycoside resistance family.

It catalyses the reaction guanosine(1405) in 16S rRNA + S-adenosyl-L-methionine = N(7)-methylguanosine(1405) in 16S rRNA + S-adenosyl-L-homocysteine. In terms of biological role, specifically methylates the N(7) position of guanine 1405 in 16S rRNA. Confers resistance to various aminoglycosides, including kanamycin, tobramycin, amikacin, arbekacin, gentamicin, sisomicin and isepamicin. This is 16S rRNA (guanine(1405)-N(7))-methyltransferase (rmtB) from Serratia marcescens.